We begin with the raw amino-acid sequence, 430 residues long: Enolase (430 aa).

Glutamine 164 contributes to the (2R)-2-phosphoglycerate binding site. Glutamate 206 acts as the Proton donor in catalysis. Residues aspartate 243, glutamate 286, and aspartate 313 each coordinate Mg(2+). (2R)-2-phosphoglycerate contacts are provided by lysine 338, arginine 367, serine 368, and lysine 389. Residue lysine 338 is the Proton acceptor of the active site.

It belongs to the enolase family. In terms of assembly, component of the RNA degradosome, a multiprotein complex involved in RNA processing and mRNA degradation. It depends on Mg(2+) as a cofactor.

It localises to the cytoplasm. The protein resides in the secreted. The protein localises to the cell surface. It catalyses the reaction (2R)-2-phosphoglycerate = phosphoenolpyruvate + H2O. The protein operates within carbohydrate degradation; glycolysis; pyruvate from D-glyceraldehyde 3-phosphate: step 4/5. In terms of biological role, catalyzes the reversible conversion of 2-phosphoglycerate (2-PG) into phosphoenolpyruvate (PEP). It is essential for the degradation of carbohydrates via glycolysis. This Dichelobacter nodosus (strain VCS1703A) protein is Enolase.